Here is a 390-residue protein sequence, read N- to C-terminus: tRNA-specific 2-thiouridylase MnmA (390 aa).

ATP contacts are provided by residues 20-27 and Leu46; that span reads AMSGGVDS. The active-site Nucleophile is Cys114. An intrachain disulfide couples Cys114 to Cys211. Gly138 provides a ligand contact to ATP. The segment at 161–163 is interaction with tRNA; the sequence is RDQ. The Cysteine persulfide intermediate role is filled by Cys211.

Belongs to the MnmA/TRMU family.

The protein resides in the cytoplasm. The enzyme catalyses S-sulfanyl-L-cysteinyl-[protein] + uridine(34) in tRNA + AH2 + ATP = 2-thiouridine(34) in tRNA + L-cysteinyl-[protein] + A + AMP + diphosphate + H(+). Functionally, catalyzes the 2-thiolation of uridine at the wobble position (U34) of tRNA, leading to the formation of s(2)U34. This chain is tRNA-specific 2-thiouridylase MnmA, found in Azorhizobium caulinodans (strain ATCC 43989 / DSM 5975 / JCM 20966 / LMG 6465 / NBRC 14845 / NCIMB 13405 / ORS 571).